A 507-amino-acid polypeptide reads, in one-letter code: Type II methyltransferase M.PstI (507 aa).

Belongs to the N(4)/N(6)-methyltransferase family. In terms of assembly, monomer.

It catalyses the reaction a 2'-deoxyadenosine in DNA + S-adenosyl-L-methionine = an N(6)-methyl-2'-deoxyadenosine in DNA + S-adenosyl-L-homocysteine + H(+). In terms of biological role, a gamma subtype methylase that recognizes the double-stranded sequence 5'-CTGCAG-3', methylates A-5 on both strands, and protects the DNA from cleavage by the PstI endonuclease. The sequence is that of Type II methyltransferase M.PstI (pstIM) from Providencia stuartii.